Here is an 88-residue protein sequence, read N- to C-terminus: Sec-independent protein translocase protein TatA (88 aa).

The helical transmembrane segment at 1–21 (MGGISITQLLIIASIVVVLFG) threads the bilayer. Residues 39-88 (FKKSMSEDDNTTSTSSDKSSQDADFTAPPIEPKANLACPDEAKNKDKEHV) form a disordered region. Residues 49-62 (TTSTSSDKSSQDAD) show a composition bias toward low complexity. A compositionally biased stretch (basic and acidic residues) spans 78-88 (DEAKNKDKEHV).

This sequence belongs to the TatA/E family. In terms of assembly, the Tat system comprises two distinct complexes: a TatABC complex, containing multiple copies of TatA, TatB and TatC subunits, and a separate TatA complex, containing only TatA subunits. Substrates initially bind to the TatABC complex, which probably triggers association of the separate TatA complex to form the active translocon.

The protein localises to the cell inner membrane. In terms of biological role, part of the twin-arginine translocation (Tat) system that transports large folded proteins containing a characteristic twin-arginine motif in their signal peptide across membranes. TatA could form the protein-conducting channel of the Tat system. The polypeptide is Sec-independent protein translocase protein TatA (Sodalis glossinidius (strain morsitans)).